The sequence spans 31 residues: Cliotide T14 (31 aa).

Residues 1 to 31 (DTIPCGESCVWIPCISSILGCSCKDKVCYHN) constitute a cross-link (cyclopeptide (Asp-Asn)). 3 cysteine pairs are disulfide-bonded: Cys-5–Cys-21, Cys-9–Cys-23, and Cys-14–Cys-28.

In terms of processing, contains 3 disulfide bonds. This is a cyclic peptide. Expressed in seed but not in root nodules.

Functionally, probably participates in a plant defense mechanism. Not active against Gram-negative bacterium E.coli ATCC 700926 or Gram-positive bacterium S.aureus ATCC 12600 up to a concentration of 100 uM under low-salt conditions. The protein is Cliotide T14 of Clitoria ternatea (Butterfly pea).